A 351-amino-acid chain; its full sequence is Protein RecA (351 aa).

73 to 80 (GPESSGKT) lines the ATP pocket.

It belongs to the RecA family.

It is found in the cytoplasm. In terms of biological role, can catalyze the hydrolysis of ATP in the presence of single-stranded DNA, the ATP-dependent uptake of single-stranded DNA by duplex DNA, and the ATP-dependent hybridization of homologous single-stranded DNAs. It interacts with LexA causing its activation and leading to its autocatalytic cleavage. This Oleidesulfovibrio alaskensis (strain ATCC BAA-1058 / DSM 17464 / G20) (Desulfovibrio alaskensis) protein is Protein RecA.